The sequence spans 879 residues: Band 4.1-like protein 1 (879 aa).

The tract at residues 1–88 (MTTETGPDSE…TPSKAQKSPQ (88 aa)) is disordered. Residues 17–35 (ETPQQPEAAAAVTTPVTPA) are compositionally biased toward low complexity. T30 bears the Phosphothreonine mark. Residues 38–50 (SHPETNSNEKHLT) show a composition bias toward basic and acidic residues. Position 75 is a phosphoserine (S75). Residues 76-87 (ERTTPSKAQKSP) are compositionally biased toward polar residues. A Phosphothreonine modification is found at T79. One can recognise an FERM domain in the interval 97–378 (AICRVTLLDA…EHHTFFRLVS (282 aa)). Y343 is subject to Phosphotyrosine. A phosphoserine mark is found at S378, S430, S437, S461, and S466. The tract at residues 381–482 (PPPKGFLVMG…VRTPTKIKEL (102 aa)) is hydrophilic. Residues 428–501 (SRSLDGAEFS…HKQEFLDKPE (74 aa)) are disordered. Residues 444–501 (ENHDAGPEGDKREDDAESGGRRSEAEEGEVRTPTKIKELKPEQETTPRHKQEFLDKPE) are compositionally biased toward basic and acidic residues. At T475 the chain carries Phosphothreonine. Residues 483-541 (KPEQETTPRHKQEFLDKPEDVLLKHQASINELKRTLKEPNSKLIHRDRDWDRERRLPSS) form a spectrin--actin-binding region. S510 bears the Phosphoserine mark. Residues 514 to 538 (LKRTLKEPNSKLIHRDRDWDRERRL) are compositionally biased toward basic and acidic residues. Positions 514–594 (LKRTLKEPNS…QDQERDAVFL (81 aa)) are disordered. Phosphoserine occurs at positions 540, 541, 544, and 546. Position 550 is a phosphothreonine (T550). Positions 550–577 (TPEKASERAGLREGSEEKVKPPRPRAPE) are enriched in basic and acidic residues. A phosphoserine mark is found at S564, S578, S639, S648, S650, S665, S666, S671, S677, and S684. The disordered stretch occupies residues 657–696 (FAQDLKGPSSQEDESGGLEDSPDRGACSTPEMPQFESVKA). T685 carries the phosphothreonine modification. S721, S782, and S868 each carry phosphoserine. The C-terminal (CTD) stretch occupies residues 743-879 (PCITTETIST…EERDKKPQES (137 aa)).

Interacts with AGAP2. In terms of tissue distribution, highest expression in brain, also present in kidney, olfactory epithelium, retina, sensory ganglia, gastrointestinal tract (only enteric neurons) and lung.

It is found in the cytoplasm. The protein resides in the cytoskeleton. Functionally, may function to confer stability and plasticity to neuronal membrane via multiple interactions, including the spectrin-actin-based cytoskeleton, integral membrane channels and membrane-associated guanylate kinases. This is Band 4.1-like protein 1 from Mus musculus (Mouse).